We begin with the raw amino-acid sequence, 463 residues long: Methionine aminopeptidase 2-2 (463 aa).

The interval 1 to 107 (MGAKTFEGGD…VPLSQLFPDG (107 aa)) is disordered. Residues 37–53 (EDGDGEFGTDDDDDGDG) are compositionally biased toward acidic residues. The segment covering 69–83 (PKKRKRSKKKKSNKK) has biased composition (basic residues). His-215 serves as a coordination point for substrate. Positions 236, 247, and 316 each coordinate a divalent metal cation. His-324 lines the substrate pocket. A divalent metal cation-binding residues include Glu-349 and Glu-444.

The protein belongs to the peptidase M24A family. Methionine aminopeptidase eukaryotic type 2 subfamily. The cofactor is Co(2+). Zn(2+) serves as cofactor. Requires Mn(2+) as cofactor. Fe(2+) is required as a cofactor.

It is found in the cytoplasm. It catalyses the reaction Release of N-terminal amino acids, preferentially methionine, from peptides and arylamides.. Cotranslationally removes the N-terminal methionine from nascent proteins. The N-terminal methionine is often cleaved when the second residue in the primary sequence is small and uncharged (Met-Ala-, Cys, Gly, Pro, Ser, Thr, or Val). The protein is Methionine aminopeptidase 2-2 of Talaromyces marneffei (strain ATCC 18224 / CBS 334.59 / QM 7333) (Penicillium marneffei).